Consider the following 295-residue polypeptide: Sulfotransferase 1A1 (295 aa).

48 to 53 (KSGTTW) lines the 3'-phosphoadenylyl sulfate pocket. Substrate is bound at residue 106–108 (KTH). Residue His-108 is the Proton acceptor of the active site. 3'-phosphoadenylyl sulfate contacts are provided by residues Arg-130, Ser-138, Tyr-193, 227 to 232 (TSFKEM), and 255 to 259 (FMRKG). The residue at position 138 (Ser-138) is a Phosphoserine.

The protein belongs to the sulfotransferase 1 family. In terms of assembly, homodimer.

The protein localises to the cytoplasm. The enzyme catalyses a phenol + 3'-phosphoadenylyl sulfate = an aryl sulfate + adenosine 3',5'-bisphosphate + H(+). It carries out the reaction 17beta-estradiol + 3'-phosphoadenylyl sulfate = 17beta-estradiol 3-sulfate + adenosine 3',5'-bisphosphate + H(+). It catalyses the reaction 4-ethylphenol + 3'-phosphoadenylyl sulfate = 4-ethylphenyl sulfate + adenosine 3',5'-bisphosphate + H(+). The catalysed reaction is 4-nitrophenol + 3'-phosphoadenylyl sulfate = 4-nitrophenyl sulfate + adenosine 3',5'-bisphosphate. The enzyme catalyses dopamine + 3'-phosphoadenylyl sulfate = dopamine 3-O-sulfate + adenosine 3',5'-bisphosphate + H(+). It carries out the reaction dopamine + 3'-phosphoadenylyl sulfate = dopamine 4-O-sulfate + adenosine 3',5'-bisphosphate + H(+). It catalyses the reaction 3,3',5-triiodo-L-thyronine + 3'-phosphoadenylyl sulfate = 3,3',5-triiodo-L-thyronine sulfate + adenosine 3',5'-bisphosphate + H(+). The catalysed reaction is 3,3',5'-triiodo-L-thyronine + 3'-phosphoadenylyl sulfate = 3,3',5'-triiodo-L-thyronine sulfate + adenosine 3',5'-bisphosphate + H(+). The enzyme catalyses 3,3'-diiodo-L-thyronine + 3'-phosphoadenylyl sulfate = 3,3'-diiodo-L-thyronine sulfate + adenosine 3',5'-bisphosphate + H(+). It carries out the reaction L-thyroxine + 3'-phosphoadenylyl sulfate = L-thyroxine sulfate + adenosine 3',5'-bisphosphate + H(+). Sulfotransferase that utilizes 3'-phospho-5'-adenylyl sulfate (PAPS) as sulfonate donor to catalyze the sulfate conjugation of a wide variety of acceptor molecules bearing a hydroxyl or an amine group. Sulfonation increases the water solubility of most compounds, and therefore their renal excretion, but it can also result in bioactivation to form active metabolites. Displays broad substrate specificity for small phenolic compounds. Plays an important role in the sulfonation of endogenous molecules such as steroid hormones. Mediates also the metabolic activation of carcinogenic N-hydroxyarylamines leading to highly reactive intermediates capable of forming DNA adducts, potentially resulting in mutagenesis. May play a role in gut microbiota-host metabolic interaction. O-sulfonates 4-ethylphenol (4-EP), a dietary tyrosine-derived metabolite produced by gut bacteria. The product 4-EPS crosses the blood-brain barrier and may negatively regulate oligodendrocyte maturation and myelination, affecting the functional connectivity of different brain regions associated with the limbic system. Catalyzes the sulfate conjugation of dopamine. Catalyzes the sulfation of T4 (L-thyroxine/3,5,3',5'-tetraiodothyronine), T3 (3,5,3'-triiodothyronine), rT3 (3,3',5'-triiodothyronine) and 3,3'-T2 (3,3'-diiodothyronine), with a substrate preference of 3,3'-T2 &gt; rT3 &gt; T3 &gt; T4. In Macaca fascicularis (Crab-eating macaque), this protein is Sulfotransferase 1A1 (SULT1A1).